The sequence spans 103 residues: Large ribosomal subunit protein bL21 (103 aa).

This sequence belongs to the bacterial ribosomal protein bL21 family. Part of the 50S ribosomal subunit. Contacts protein L20.

This protein binds to 23S rRNA in the presence of protein L20. This is Large ribosomal subunit protein bL21 from Cupriavidus necator (strain ATCC 17699 / DSM 428 / KCTC 22496 / NCIMB 10442 / H16 / Stanier 337) (Ralstonia eutropha).